A 297-amino-acid polypeptide reads, in one-letter code: Probable endonuclease 4 (297 aa).

The Zn(2+) site is built by H69, H110, E145, D179, H182, H214, D227, H229, and E259.

Belongs to the AP endonuclease 2 family. Zn(2+) is required as a cofactor.

The enzyme catalyses Endonucleolytic cleavage to 5'-phosphooligonucleotide end-products.. Endonuclease IV plays a role in DNA repair. It cleaves phosphodiester bonds at apurinic or apyrimidinic (AP) sites, generating a 3'-hydroxyl group and a 5'-terminal sugar phosphate. The sequence is that of Probable endonuclease 4 from Bacillus subtilis (strain 168).